We begin with the raw amino-acid sequence, 463 residues long: RuvB-like helicase 2 (463 aa).

76–83 serves as a coordination point for ATP; that stretch reads GPPSTGKT.

The protein belongs to the RuvB family. As to quaternary structure, may form heterododecamers with RVB1. Component of the SWR1 chromatin remodeling complex, the INO80 chromatin remodeling complex, and of the R2TP complex.

Its subcellular location is the nucleus. The catalysed reaction is ATP + H2O = ADP + phosphate + H(+). In terms of biological role, DNA helicase which participates in several chromatin remodeling complexes, including the SWR1 and the INO80 complexes. The SWR1 complex mediates the ATP-dependent exchange of histone H2A for the H2A variant HZT1 leading to transcriptional regulation of selected genes by chromatin remodeling. The INO80 complex remodels chromatin by shifting nucleosomes and is involved in DNA repair. Also involved in pre-rRNA processing. The chain is RuvB-like helicase 2 (RVB2) from Cryptococcus neoformans var. neoformans serotype D (strain JEC21 / ATCC MYA-565) (Filobasidiella neoformans).